A 141-amino-acid polypeptide reads, in one-letter code: Ribonuclease VapC38 (141 aa).

Residues Asp5 and Asp102 each contribute to the Mg(2+) site.

Belongs to the PINc/VapC protein family. Mg(2+) serves as cofactor.

It localises to the secreted. Its function is as follows. Toxic component of a type II toxin-antitoxin (TA) system. An RNase. Its cognate antitoxin is VapB38. This Mycobacterium tuberculosis (strain ATCC 25618 / H37Rv) protein is Ribonuclease VapC38.